We begin with the raw amino-acid sequence, 498 residues long: MLQKISSDSYRRLLAPVLSSSSSLSSTSINRTEIERITIIINGHPFPNHPIQPILAKHIPLSSLSPEFVSEVLGRLFAAHSNGLKALEFFKYSLKSSKSSPTSDSFEKTLHILARMRYFDQAWALMAEVRKDYPNLLSFKSMSILLCKIAKFGSYEETLEAFVKMEKEIFRKKFGVDEFNILLRAFCTEREMKEARSIFEKLHSRFNPDVKTMNILLLGFKEAGDVTATELFYHEMVKRGFKPNSVTYGIRIDGFCKKRNFGEALRLFEDMDRLDFDITVQILTTLIHGSGVARNKIKARQLFDEISKRGLTPDCGAYNALMSSLMKCGDVSGAIKVMKEMEEKGIEPDSVTFHSMFIGMMKSKEFGFNGVCEYYQKMKERSLVPKTPTIVMLMKLFCHNGEVNLGLDLWKYMLEKGYCPHGHALELLTTALCARRRANDAFECSWQTVERGRCVSEPVYRMLETSLSSNNELKKLEELKEEIQKLHSFLPPPEIQLM.

9 PPR repeats span residues 102 to 132 (TSDS…VRKD), 138 to 172 (SFKS…IFRK), 175 to 205 (GVDE…LHSR), 209 to 243 (DVKT…GFKP), 244 to 278 (NSVT…DFDI), 279 to 313 (TVQI…GLTP), 314 to 348 (DCGA…GIEP), 349 to 385 (DSVT…SLVP), and 386 to 420 (KTPT…GYCP).

This sequence belongs to the PPR family. P subfamily.

This chain is Pentatricopeptide repeat-containing protein At3g61360, found in Arabidopsis thaliana (Mouse-ear cress).